Here is a 950-residue protein sequence, read N- to C-terminus: 2-oxoglutarate dehydrogenase E1 component (950 aa).

It belongs to the alpha-ketoglutarate dehydrogenase family. In terms of assembly, homodimer. Part of the 2-oxoglutarate dehydrogenase (OGDH) complex composed of E1 (2-oxoglutarate dehydrogenase), E2 (dihydrolipoamide succinyltransferase) and E3 (dihydrolipoamide dehydrogenase); the complex contains multiple copies of the three enzymatic components (E1, E2 and E3). Thiamine diphosphate serves as cofactor.

It carries out the reaction N(6)-[(R)-lipoyl]-L-lysyl-[protein] + 2-oxoglutarate + H(+) = N(6)-[(R)-S(8)-succinyldihydrolipoyl]-L-lysyl-[protein] + CO2. Functionally, E1 component of the 2-oxoglutarate dehydrogenase (OGDH) complex which catalyzes the decarboxylation of 2-oxoglutarate, the first step in the conversion of 2-oxoglutarate to succinyl-CoA and CO(2). The sequence is that of 2-oxoglutarate dehydrogenase E1 component (odhA) from Cupriavidus necator (strain ATCC 17699 / DSM 428 / KCTC 22496 / NCIMB 10442 / H16 / Stanier 337) (Ralstonia eutropha).